Here is a 1400-residue protein sequence, read N- to C-terminus: DNA-directed RNA polymerase subunit beta' (1400 aa).

Zn(2+) is bound by residues C70, C72, C85, and C88. Positions 460, 462, and 464 each coordinate Mg(2+). Residues C814, C887, C894, and C897 each contribute to the Zn(2+) site.

This sequence belongs to the RNA polymerase beta' chain family. As to quaternary structure, the RNAP catalytic core consists of 2 alpha, 1 beta, 1 beta' and 1 omega subunit. When a sigma factor is associated with the core the holoenzyme is formed, which can initiate transcription. It depends on Mg(2+) as a cofactor. The cofactor is Zn(2+).

It carries out the reaction RNA(n) + a ribonucleoside 5'-triphosphate = RNA(n+1) + diphosphate. Functionally, DNA-dependent RNA polymerase catalyzes the transcription of DNA into RNA using the four ribonucleoside triphosphates as substrates. The polypeptide is DNA-directed RNA polymerase subunit beta' (Marinomonas sp. (strain MWYL1)).